Consider the following 1065-residue polypeptide: Probable arabinosyltransferase B (1065 aa).

12 consecutive transmembrane segments (helical) span residues 15 to 37, 204 to 226, 241 to 263, 394 to 413, 417 to 436, 441 to 463, 510 to 527, 540 to 557, 567 to 589, 596 to 618, 633 to 655, and 667 to 689; these read WVATIAGLIGFVLSVATPLLPVV, LKLAAMVTAILATIVALVALWRL, NWRTFTLADVAVIFGFVLWHVIG, YSRLTPAALAVITAAFTLGV, GLIAVAALVAGGRPILRILV, VVGTWPLVAPMLAAGTVILTVVF, FGFLITALCLFTAVFIML, AWRLMGVIFGTMFFLMFT, LFAAVGAAMAALTTVLVSPAVLG, AFLAALLFMMALCFATTNGWWYV, GGITVSTVFFSMFVAAALYAIWL, and LARALTAAPVPLAAGFMALVFIA.

Belongs to the emb family.

The protein resides in the cell membrane. Arabinosyl transferase responsible for the polymerization of arabinose into the arabinan of arabinogalactan. This is Probable arabinosyltransferase B (embB) from Mycobacterium avium.